The following is a 313-amino-acid chain: 7,8-didemethyl-8-hydroxy-5-deazariboflavin synthase (313 aa).

Positions 4–235 (ITYSPAYTLV…AEITLQIPPN (232 aa)) constitute a Radical SAM core domain. Residues cysteine 18, cysteine 22, and cysteine 25 each coordinate [4Fe-4S] cluster.

The protein belongs to the radical SAM superfamily. CofG family. As to quaternary structure, consists of two subunits, CofG and CofH. Requires [4Fe-4S] cluster as cofactor.

It carries out the reaction 5-amino-5-(4-hydroxybenzyl)-6-(D-ribitylimino)-5,6-dihydrouracil + S-adenosyl-L-methionine = 7,8-didemethyl-8-hydroxy-5-deazariboflavin + 5'-deoxyadenosine + L-methionine + NH4(+) + H(+). The protein operates within cofactor biosynthesis; coenzyme F0 biosynthesis. Its function is as follows. Catalyzes the radical-mediated synthesis of 7,8-didemethyl-8-hydroxy-5-deazariboflavin from 5-amino-5-(4-hydroxybenzyl)-6-(D-ribitylimino)-5,6-dihydrouracil. The sequence is that of 7,8-didemethyl-8-hydroxy-5-deazariboflavin synthase from Synechocystis sp. (strain ATCC 27184 / PCC 6803 / Kazusa).